Reading from the N-terminus, the 491-residue chain is MRLYFRKLWLTNLFLGGALASSAAIGAVSPKTYKDADFYVAPTQQDVNYDLVDDFGANGNDTSDDSNALQRAINAISRKPNGGTLLIPNGTYHFLGIQMKSNVHIRVESDVIIKPTWNGDGKNHRLFEVGVNNIVRNFSFQGLGNGFLVDFKDSRDKNLAVFKLGDVRNYKISNFTIDDNKTIFASILVDVTERNGRLHWSRNGIIERIKQNNALFGYGLIQTYGADNILFRNLHSEGGIALRMETDNLLMKNYKQGGIRNIFADNIRCSKGLAAVMFGPHFMKNGDVQVTNVSSVSCGSAVRSDSGFVELFSPTDEVHTRQSWKQAVESKLGRGCAQTPYARGNGGTRWAARVTQKDACLDKAKLEYGIEPGSFGTVKVFDVTARFGYNADLKQDQLDYFSTSNPMCKRVCLPTKEQWSKQGQIYIGPSLAAVIDTTPETSKYDYDVKTFNVKRINFPVNSHKTIDTNTESSRVCNYYGMSECSSSRWER.

The N-terminal stretch at 1-23 is a signal peptide; it reads MRLYFRKLWLTNLFLGGALASSA. 4 disulfide bridges follow: Cys-269–Cys-298, Cys-336–Cys-360, Cys-408–Cys-476, and Cys-412–Cys-484.

The protein belongs to the glycosyl hydrolase 82 family.

It is found in the secreted. It carries out the reaction Endohydrolysis of 1,4-beta-D-linkages between D-galactose 4-sulfate and 3,6-anhydro-D-galactose-2-sulfate in iota-carrageenans.. Hydrolyzes iota-carrageenans, sulfated 1,3-alpha-1,4-beta galactans from red algal cell walls, with an inversion of anomeric configuration. Also active against hybrid iota-/nu-carrageenan, not active against kappa- or lambda-carrageenans. The polypeptide is Iota-carrageenase (Alteromonas macleodii (Pseudoalteromonas macleodii)).